The following is a 235-amino-acid chain: 7-cyano-7-deazaguanine synthase (235 aa).

ATP is bound at residue 12–22; it reads FSGGQDSTTCL. Zn(2+)-binding residues include cysteine 200, cysteine 215, cysteine 218, and cysteine 221.

The protein belongs to the QueC family. It depends on Zn(2+) as a cofactor.

It carries out the reaction 7-carboxy-7-deazaguanine + NH4(+) + ATP = 7-cyano-7-deazaguanine + ADP + phosphate + H2O + H(+). It participates in purine metabolism; 7-cyano-7-deazaguanine biosynthesis. In terms of biological role, catalyzes the ATP-dependent conversion of 7-carboxy-7-deazaguanine (CDG) to 7-cyano-7-deazaguanine (preQ(0)). The chain is 7-cyano-7-deazaguanine synthase from Leptothrix cholodnii (strain ATCC 51168 / LMG 8142 / SP-6) (Leptothrix discophora (strain SP-6)).